A 339-amino-acid chain; its full sequence is DNA-directed RNA polymerase subunit alpha (339 aa).

The tract at residues 1 to 235 is alpha N-terminal domain (alpha-NTD); the sequence is MTIQKNWQEL…DQLNVFVNFE (235 aa). The tract at residues 251–339 is alpha C-terminal domain (alpha-CTD); the sequence is FNPAFLKKVD…ELAKRFEDHY (89 aa).

It belongs to the RNA polymerase alpha chain family. In terms of assembly, homodimer. The RNAP catalytic core consists of 2 alpha, 1 beta, 1 beta' and 1 omega subunit. When a sigma factor is associated with the core the holoenzyme is formed, which can initiate transcription.

The catalysed reaction is RNA(n) + a ribonucleoside 5'-triphosphate = RNA(n+1) + diphosphate. Its function is as follows. DNA-dependent RNA polymerase catalyzes the transcription of DNA into RNA using the four ribonucleoside triphosphates as substrates. This is DNA-directed RNA polymerase subunit alpha from Afipia carboxidovorans (strain ATCC 49405 / DSM 1227 / KCTC 32145 / OM5) (Oligotropha carboxidovorans).